The chain runs to 141 residues: Nucleoside diphosphate kinase (141 aa).

Residues Lys-11, Phe-59, Arg-87, Thr-93, Arg-104, and Asn-114 each contribute to the ATP site. His-117 (pros-phosphohistidine intermediate) is an active-site residue.

Belongs to the NDK family. As to quaternary structure, homotetramer. The cofactor is Mg(2+).

Its subcellular location is the cytoplasm. The enzyme catalyses a 2'-deoxyribonucleoside 5'-diphosphate + ATP = a 2'-deoxyribonucleoside 5'-triphosphate + ADP. It carries out the reaction a ribonucleoside 5'-diphosphate + ATP = a ribonucleoside 5'-triphosphate + ADP. Functionally, major role in the synthesis of nucleoside triphosphates other than ATP. The ATP gamma phosphate is transferred to the NDP beta phosphate via a ping-pong mechanism, using a phosphorylated active-site intermediate. This Pseudomonas fluorescens (strain Pf0-1) protein is Nucleoside diphosphate kinase.